The sequence spans 339 residues: DNA-directed RNA polymerase subunit alpha (339 aa).

Residues 1–233 (MVREEVAGST…DLFLPFLHAE (233 aa)) are alpha N-terminal domain (alpha-NTD). The tract at residues 266-339 (GIPLNCIFID…IDLLKNKLSF (74 aa)) is alpha C-terminal domain (alpha-CTD).

Belongs to the RNA polymerase alpha chain family. As to quaternary structure, in plastids the minimal PEP RNA polymerase catalytic core is composed of four subunits: alpha, beta, beta', and beta''. When a (nuclear-encoded) sigma factor is associated with the core the holoenzyme is formed, which can initiate transcription.

The protein resides in the plastid. Its subcellular location is the chloroplast. It carries out the reaction RNA(n) + a ribonucleoside 5'-triphosphate = RNA(n+1) + diphosphate. Functionally, DNA-dependent RNA polymerase catalyzes the transcription of DNA into RNA using the four ribonucleoside triphosphates as substrates. This is DNA-directed RNA polymerase subunit alpha from Elymus canadensis (Canada wild rye).